Here is a 1088-residue protein sequence, read N- to C-terminus: RNA-directed RNA polymerase (1088 aa).

The region spanning 501 to 687 (LSYGDVTRFL…AKRYIAGGKI (187 aa)) is the RdRp catalytic domain.

The protein belongs to the reoviridae RNA-directed RNA polymerase family. In terms of assembly, interacts with VP3 (Potential). Interacts with VP2; this interaction activates VP1. Interacts with NSP5; this interaction is probably necessary for the formation of functional virus factories. Interacts with NSP2; this interaction is weak. Requires Mg(2+) as cofactor.

Its subcellular location is the virion. It carries out the reaction RNA(n) + a ribonucleoside 5'-triphosphate = RNA(n+1) + diphosphate. In terms of biological role, RNA-directed RNA polymerase that is involved in both transcription and genome replication. Together with VP3 capping enzyme, forms an enzyme complex positioned near the channels situated at each of the five-fold vertices of the core. Following infection, the outermost layer of the virus is lost, leaving a double-layered particle (DLP) made up of the core and VP6 shell. VP1 then catalyzes the transcription of fully conservative plus-strand genomic RNAs that are extruded through the DLP's channels into the cytoplasm where they function as mRNAs for translation of viral proteins. One copy of each of the viral (+)RNAs is also recruited during core assembly, together with newly synthesized polymerase complexes and VP2. The polymerase of these novo-formed particles catalyzes the synthesis of complementary minus-strands leading to dsRNA formation. To do so, the polymerase specifically recognizes and binds 4 bases 5'-UGUG-3' in the conserved 3'-sequence of plus-strand RNA templates. VP2 presumably activates the autoinhibited VP1-RNA complex to coordinate packaging and genome replication. Once dsRNA synthesis is complete, the polymerase switches to the transcriptional mode, thus providing secondary transcription. The polypeptide is RNA-directed RNA polymerase (Bos taurus (Bovine)).